Consider the following 321-residue polypeptide: Glucokinase (321 aa).

10-15 (GDIGGT) provides a ligand contact to ATP.

Belongs to the bacterial glucokinase family.

The protein resides in the cytoplasm. The enzyme catalyses D-glucose + ATP = D-glucose 6-phosphate + ADP + H(+). This chain is Glucokinase, found in Marinobacter nauticus (strain ATCC 700491 / DSM 11845 / VT8) (Marinobacter aquaeolei).